Reading from the N-terminus, the 120-residue chain is Ribosome-binding factor A (120 aa).

The protein belongs to the RbfA family. As to quaternary structure, monomer. Binds 30S ribosomal subunits, but not 50S ribosomal subunits or 70S ribosomes.

It localises to the cytoplasm. One of several proteins that assist in the late maturation steps of the functional core of the 30S ribosomal subunit. Associates with free 30S ribosomal subunits (but not with 30S subunits that are part of 70S ribosomes or polysomes). Required for efficient processing of 16S rRNA. May interact with the 5'-terminal helix region of 16S rRNA. The chain is Ribosome-binding factor A from Fusobacterium nucleatum subsp. nucleatum (strain ATCC 25586 / DSM 15643 / BCRC 10681 / CIP 101130 / JCM 8532 / KCTC 2640 / LMG 13131 / VPI 4355).